Consider the following 479-residue polypeptide: Long-chain alcohol oxidase (479 aa).

The FAD-binding PCMH-type domain occupies 14–183 (QILRPSAAYT…LAVRIRCREQ (170 aa)). At His-49 the chain carries Pros-8alpha-FAD histidine. Residues Thr-113, Gly-116, 120–123 (TGTH), and Ile-173 each bind FAD. Residues 241–258 (LYWLGTMDYGLILQILFL) traverse the membrane as a helical segment. Residues Arg-369 and His-425 each coordinate FAD.

It belongs to the oxygen-dependent FAD-linked oxidoreductase family. FAD is required as a cofactor.

Its subcellular location is the cell membrane. The catalysed reaction is a long-chain primary fatty alcohol + O2 = a long-chain fatty aldehyde + H2O2. The enzyme catalyses dodecan-1-ol + O2 = dodecanal + H2O2. It carries out the reaction tetradecan-1-ol + O2 = tetradecanal + H2O2. It catalyses the reaction octan-1-ol + O2 = octanal + H2O2. The catalysed reaction is decan-1-ol + O2 = decanal + H2O2. The protein operates within lipid metabolism; fatty acid metabolism. In vitro catalyzes the oxidation of a range of fatty alcohols having a carbon chain length of six and above, with a reduction of O2 to H2O2. Shows the highest activity with 1-dodecanol. Is likely involved in lipid metabolism. The chain is Long-chain alcohol oxidase from Uncultured marine euryarchaeote.